We begin with the raw amino-acid sequence, 412 residues long: Inositol polyphosphate-5-phosphatase A (412 aa).

A lipid anchor (S-farnesyl cysteine) is attached at Cys-409. The propeptide at 410-412 is removed in mature form; sequence VVQ.

The protein belongs to the inositol 1,4,5-trisphosphate 5-phosphatase type I family. As to quaternary structure, interacts with TASOR. Isoprenylation at Cys-409 is required for localization at the membrane. As to expression, predominantly expressed in heart, brain, and skeletal muscle. In brain; high level in Purkinje cells.

It localises to the cell membrane. It is found in the cell projection. The protein resides in the dendrite. The enzyme catalyses 1D-myo-inositol 1,4,5-trisphosphate + H2O = 1D-myo-inositol 1,4-bisphosphate + phosphate. It carries out the reaction 1D-myo-inositol 1,3,4,5-tetrakisphosphate + H2O = 1D-myo-inositol 1,3,4-trisphosphate + phosphate. In terms of biological role, phosphatase that specifically hydrolyzes the 5-phosphate of inositol 1,4,5-trisphosphate to inositol 1,4-bisphosphate, and inositol 1,3,4,5-tetrasphosphate to inositol 1,3,4-trisphosphate. Plays a crucial role in the survival of cerebellar Purkinje cells. The polypeptide is Inositol polyphosphate-5-phosphatase A (Homo sapiens (Human)).